Here is a 1410-residue protein sequence, read N- to C-terminus: Ribosome-binding protein 1 (1410 aa).

The Lumenal segment spans residues 1 to 7 (MDIYDTQ). Residues 8-28 (TLGVVVFGGFMVVSAIGIFLV) traverse the membrane as a helical segment. Residues 29-1410 (STFSMKETSY…GSSSKEGTSV (1382 aa)) are Cytoplasmic-facing. Disordered stretches follow at residues 44 to 90 (NQRK…DPAP) and 129 to 152 (QEKLASSPKDKKKKEKKVAKVEPA). The span at 52–63 (THHQKVEKKKKE) shows a compositional bias: basic residues. Residues 64–88 (KTVEKKGKTKKKEEKPNGKIPDHDP) show a composition bias toward basic and acidic residues. A Glycyl lysine isopeptide (Lys-Gly) (interchain with G-Cter in SUMO2) cross-link involves residue lysine 148. Residues serine 159 and serine 165 each carry the phosphoserine modification. Disordered regions lie at residues 173 to 648 (APKE…PLYL) and 895 to 925 (QSSHASLRADAEKAQEQQQQMAELHSKLQSS). Composition is skewed to polar residues over residues 191-209 (TPATGTTQGKKAEGTQNQS) and 225-238 (TPNQGKKTEGTPNQ). 33 consecutive repeat copies span residues 197–206 (TQGKKAEGTQ), 207–216 (NQSKKAEGAP), 217–226 (NQGRKAEGTP), 227–236 (NQGKKTEGTP), 237–246 (NQGKKAEGTP), 247–256 (NQGKKAEGTP), 257–266 (NQGKKAEGAQ), 267–276 (NQGKKVDTTP), 277–286 (NQGKKVEGAP), 287–296 (TQGRKAEGAQ), 297–306 (NQAKKVEGAQ), 307–316 (NQGKKAEGAQ), 317–326 (NQGKKGEGAQ), 327–336 (NQGKKAEGAQ), 337–346 (NQGKKAEGAQ), 347–356 (NQGKKAEGAQ), 357–366 (NQGKKAEGAQ), 367–376 (NQGKKAEGAQ), 377–386 (NQGKKAEGAQ), 387–396 (NQGKKVEGAQ), 397–406 (NQGKKAEGAQ), 407–416 (NQGKKAEGAQ), 417–426 (NQGKKAEGAQ), 427–436 (NQGKKAEGAQ), 437–446 (NQGKKAEGAQ), 447–456 (NQGKKAEGAQ), 457–466 (NQGKKAEGAQ), 467–476 (NQGKKVEGAQ), 477–486 (NQGKKAEGAQ), 487–496 (NQGKKAEGAQ), 497–506 (NQGKKAEGAQ), 507–516 (NQGQKGEGAQ), and 517–526 (NQGKKTEGAQ). A 41 X 10 AA approximate tandem repeats of [TN]-Q-[GSA]-[KRQT]-K-[ATGSV]-[ED]-[GTAS]-[ATIS]-[PQTAS] region spans residues 197–604 (TQGKKAEGTQ…NQGKKTESAS (408 aa)). 4 positions are modified to phosphothreonine: threonine 225, threonine 235, threonine 245, and threonine 255. Composition is skewed to polar residues over residues 265-278 (AQNQGKKVDTTPNQ) and 295-519 (AQNQ…QNQG). Positions 520–532 (KKTEGAQGKKAER) are enriched in basic and acidic residues. One copy of the 34; approximate repeat lies at 527–534 (GKKAERSP). Residue serine 533 is modified to Phosphoserine. The stretch at 535–544 (NQGKKGEGAP) is repeat 35. One copy of the 36; approximate repeat lies at 545-554 (IQGKKADSVA). Residues 553 to 567 (VANQGTKVEGITNQG) are compositionally biased toward polar residues. 2 tandem repeats follow at residues 555 to 564 (NQGTKVEGIT) and 565 to 574 (NQGKKAEGSP). The segment covering 568 to 581 (KKAEGSPSEGKKAE) has biased composition (basic and acidic residues). 2 positions are modified to phosphoserine: serine 573 and serine 583. Residues 575–584 (SEGKKAEGSP) form a 39; approximate repeat. 2 consecutive repeat copies span residues 585–594 (NQGKKADAAA) and 595–604 (NQGKKTESAS). A compositionally biased stretch (polar residues) spans 602-612 (SASVQGRNTDV). The residue at position 615 (serine 615) is a Phosphoserine. A Glycyl lysine isopeptide (Lys-Gly) (interchain with G-Cter in SUMO1) cross-link involves residue lysine 620. The residue at position 900 (serine 900) is a Phosphoserine. At lysine 932 the chain carries N6-acetyllysine. Phosphoserine is present on residues serine 959 and serine 978. Disordered stretches follow at residues 1093–1122 (GPTLLKHPPAPAEPSSDLASKLREAEETQS), 1260–1287 (EMKSHVEDGDIAGAPASSPEAPPAEQDP), 1330–1362 (EKLRTAGPLESSETEEASQLKERLEKEKKLTSD), and 1378–1410 (QEQLAREKDTVKKLQEQLEKAEDGSSSKEGTSV). Residues serine 1276 and serine 1277 each carry the phosphoserine modification. Composition is skewed to basic and acidic residues over residues 1347–1360 (SQLKERLEKEKKLT) and 1381–1403 (LAREKDTVKKLQEQLEKAEDGSS).

Its subcellular location is the endoplasmic reticulum membrane. In terms of biological role, acts as a ribosome receptor and mediates interaction between the ribosome and the endoplasmic reticulum membrane. The protein is Ribosome-binding protein 1 (RRBP1) of Homo sapiens (Human).